Here is a 261-residue protein sequence, read N- to C-terminus: L-erythrulose-1-phosphate isomerase (261 aa).

Catalysis depends on H99, which acts as the Electrophile. The Proton acceptor role is filled by E172.

This sequence belongs to the triosephosphate isomerase family.

It catalyses the reaction L-erythrulose 1-phosphate = D-erythrulose 4-phosphate. Its pathway is carbohydrate metabolism. Its function is as follows. Involved in catabolism of D-apiose. Catalyzes the isomerization of L-erythrulose 1-phosphate to D-erythrulose 4-phosphate. The protein is L-erythrulose-1-phosphate isomerase of Rhizobium rhizogenes (strain K84 / ATCC BAA-868) (Agrobacterium radiobacter).